Reading from the N-terminus, the 121-residue chain is uncharacterized protein (121 aa).

An HIT domain is found at 7 to 121 (IFCKIVRGEV…GGREMSWPPG (115 aa)). Residues 105-109 (HLHLH) carry the Histidine triad motif motif.

This is an uncharacterized protein from Aquifex aeolicus (strain VF5).